Reading from the N-terminus, the 555-residue chain is MARVEL domain-containing protein 2 (555 aa).

The segment covering 1-20 has biased composition (basic and acidic residues); sequence MSSSDARSRIRDRGYSEVPR. Residues 1 to 71 form a disordered region; sequence MSSSDARSRI…FYSSDTEEPA (71 aa). Residues 1–191 are Cytoplasmic-facing; it reads MSSSDARSRI…YMKSWAGLLR (191 aa). Residues 46 to 59 are compositionally biased toward pro residues; it reads PLPPPPLPLQPPFG. 3 positions are modified to phosphoserine: Ser-117, Ser-121, and Ser-158. The disordered stretch occupies residues 118-142; it reads PPASPARANHHPYKDPSRGSQGTFN. Position 163 is a phosphothreonine (Thr-163). The 180-residue stretch at 185-364 folds into the MARVEL domain; the sequence is SWAGLLRILG…SALVCLKLWR (180 aa). Residues 192-212 form a helical membrane-spanning segment; that stretch reads ILGVVELLLGAGVFACVTAYI. Residues 213–251 lie on the Extracellular side of the membrane; the sequence is HKDNEWYNLFGYTQPYGMGGLGSLGNTYGGYYYSGPKTP. Residues 252–272 traverse the membrane as a helical segment; it reads FVLVVAGLAWITTIIILVLGM. Over 273–288 the chain is Cytoplasmic; it reads SMYYRTILLDSNWWPL. A helical transmembrane segment spans residues 289–309; it reads TEFGVNVALFILYMAAAIVYV. Topologically, residues 310–338 are extracellular; the sequence is NDTNRGGLCYYPLFNTPMNAMFCRVEGGQ. Residues 339–359 form a helical membrane-spanning segment; that stretch reads IAAMIFLFVTMIVYLVSALVC. Topologically, residues 360-555 are cytoplasmic; that stretch reads LKLWRHEAAR…VMNWDTQGYP (196 aa). Residue Ser-384 is modified to Phosphoserine. Lys-408 is covalently cross-linked (Glycyl lysine isopeptide (Lys-Gly) (interchain with G-Cter in ubiquitin)). In terms of domain architecture, OCEL spans 437–548; sequence PDYVAKYPVI…RIQEYDKVMN (112 aa). Residues 521-545 are a coiled coil; it reads EKKERCDYLKNKLSHIKQRIQEYDK.

Belongs to the ELL/occludin family. Interacts with TJP1. Interacts with the ubiquitin ligase ITCH. Interacts (via C-terminal cytoplasmic domain) with LSR (via the cytoplasmic domain), ILDR1 and ILDR2; the interaction is required to recruit MARVELD2 to tricellular contacts. Ubiquitinated by ITCH; but this ubiquitination does not lead to proteasomal degradation. Polyubiquitinated at Lys-408 via 'Lys-63'-linked ubiquitin chains; deubiquitinated by USP53. In terms of processing, phosphorylated. As to expression, detected in small intestine, stomach and kidney, in epithelial cells. Detected in pancreas, retina and lung, and in stria vascularis, utricle and the organ of Conti in the inner ear (at protein level). Predominantly detected in small intestine, lung and kidney, with lower levels in liver, testis and brain. In colon, expressed in the entire crypts.

It is found in the cell membrane. The protein localises to the cell junction. Its subcellular location is the tight junction. Functionally, plays a role in the formation of tricellular tight junctions and of epithelial barriers. Required for normal hearing via its role in the separation of the endolymphatic and perilymphatic spaces of the organ of Corti in the inner ear, and for normal survival of hair cells in the organ of Corti. In Mus musculus (Mouse), this protein is MARVEL domain-containing protein 2.